A 148-amino-acid chain; its full sequence is SsrA-binding protein (148 aa).

This sequence belongs to the SmpB family.

It is found in the cytoplasm. In terms of biological role, required for rescue of stalled ribosomes mediated by trans-translation. Binds to transfer-messenger RNA (tmRNA), required for stable association of tmRNA with ribosomes. tmRNA and SmpB together mimic tRNA shape, replacing the anticodon stem-loop with SmpB. tmRNA is encoded by the ssrA gene; the 2 termini fold to resemble tRNA(Ala) and it encodes a 'tag peptide', a short internal open reading frame. During trans-translation Ala-aminoacylated tmRNA acts like a tRNA, entering the A-site of stalled ribosomes, displacing the stalled mRNA. The ribosome then switches to translate the ORF on the tmRNA; the nascent peptide is terminated with the 'tag peptide' encoded by the tmRNA and targeted for degradation. The ribosome is freed to recommence translation, which seems to be the essential function of trans-translation. The polypeptide is SsrA-binding protein (Ehrlichia canis (strain Jake)).